A 522-amino-acid polypeptide reads, in one-letter code: MSQQHTLPVTLSPALSQELLKTVPPPVNTQQEQMKQPTPLPPPCQKVLGELPVEVPSKQEEKHMTTVKGLPEQECEQQQQEPQEQELQQQHWEQHEEHQKAENPEQQLKQEKAQRDQQLNEHLEEEKKLLDQQLNQELIKRDEQLGIKKEQLLELTEQQEGQLEHLEQQEGQLELPEQQEGQLEHLEQQEGQLKHLDQQGKQPELPEQQVAQLKHLEQQEGQLKHLEHQKGELQVPEEQVGQLKYLEQQEGQLKHLDQQEKQPELPEQQVGQLKHLEQQEGQLEHMEHQEGQLGLPEQQVGQLKQLEEQEGQPKHLEEEEGQLKHLVQQEGQLEHLVQQERQLEQQEGKVQHLEQQVEQLKHLEEQEGQLKHLEQQQGQLEVSEQQVGQPKHLEQEGKQLELPEQQEGQLKHLEKQEAQLELPEQQVGQPKHPEQQEKQLEHPEQQEGQLKHLEQQEGQLKDLEQQKGQLEQQQGQLEQPVFAPAPGQVQDIQPVLPTKGEALLPVEQQQQKQEVQWPPKHK.

The segment covering M1 to L15 has biased composition (polar residues). Disordered regions lie at residues M1–E126, Q159–Q329, and Q366–L496. Residues E76–H91 are compositionally biased toward low complexity. Residues W92–E126 show a composition bias toward basic and acidic residues. Residues Q169–G181 are compositionally biased toward low complexity. 5 stretches are compositionally biased toward basic and acidic residues: residues Q182–Q198, K214–G231, Q252–E264, K274–E290, and Q305–L323. Residues Q375–Q389 are compositionally biased toward low complexity. Composition is skewed to basic and acidic residues over residues K391 to E401, Q409 to A418, and K431 to Q465. A compositionally biased stretch (low complexity) spans Q466–Q479.

It belongs to the involucrin family. Directly or indirectly cross-linked to cornifelin (CNFN). In terms of processing, substrate of transglutaminase. Specific glutamines or lysines are cross-linked to keratins, desmoplakin and to inter involucrin molecules. In terms of tissue distribution, keratinocytes of epidermis and other stratified squamous epithelia.

Its subcellular location is the cytoplasm. Functionally, part of the insoluble cornified cell envelope (CE) of stratified squamous epithelia. The chain is Involucrin (IVL) from Hylobates lar (Lar gibbon).